The chain runs to 668 residues: Fructose-1,6-bisphosphatase class 3 (668 aa).

This sequence belongs to the FBPase class 3 family. Mn(2+) serves as cofactor.

The enzyme catalyses beta-D-fructose 1,6-bisphosphate + H2O = beta-D-fructose 6-phosphate + phosphate. The protein operates within carbohydrate biosynthesis; gluconeogenesis. The protein is Fructose-1,6-bisphosphatase class 3 of Clostridium botulinum (strain Loch Maree / Type A3).